A 278-amino-acid polypeptide reads, in one-letter code: MSQAFPAPAKLNLFLHVVGRRDDGYHLLQSVFRLIDRADTVHLELRDDGRIVREGALPGVSEDQDLTVRAARLLQPYARPGAGVGIRLDKRLPMGGGLGGGSSDAATVLLALNRLWEVDLPRQRLQALALRLGADVPVFVFGQTAFAEGVGELLQPIGAPVAWYVVLTPPVHVPTAAIFAAPELTRNTPALKIAPFSAGMGHNDLEPVVVGRYPEVGRHLQWLGQFGEARMTGSGACVFASFATEDAARSVLQALPDTMQGFVARGLDKHPLYDFVPE.

Residue Lys10 is part of the active site. 93-103 is a binding site for ATP; the sequence is PMGGGLGGGSS. Asp135 is an active-site residue.

The protein belongs to the GHMP kinase family. IspE subfamily.

It carries out the reaction 4-CDP-2-C-methyl-D-erythritol + ATP = 4-CDP-2-C-methyl-D-erythritol 2-phosphate + ADP + H(+). It participates in isoprenoid biosynthesis; isopentenyl diphosphate biosynthesis via DXP pathway; isopentenyl diphosphate from 1-deoxy-D-xylulose 5-phosphate: step 3/6. Its function is as follows. Catalyzes the phosphorylation of the position 2 hydroxy group of 4-diphosphocytidyl-2C-methyl-D-erythritol. This is 4-diphosphocytidyl-2-C-methyl-D-erythritol kinase from Thiobacillus denitrificans (strain ATCC 25259 / T1).